The sequence spans 218 residues: Adenylate kinase (218 aa).

Residue 10–15 participates in ATP binding; sequence GAGKGT. Residues 30-59 are NMP; that stretch reads STGDMLRAAVQAQTPVGIEAKKVMDAGKLV. Residues threonine 31, arginine 36, 57 to 59, 85 to 88, and glutamine 92 each bind AMP; these read KLV and GFPR. Residues 122–159 are LID; the sequence is GRRVHLSSGRTYHVRFNPPKKEGLDDLTGEPLVQREDD. Residues arginine 123 and 132 to 133 each bind ATP; that span reads TY. Positions 156 and 167 each coordinate AMP. Glycine 203 is an ATP binding site.

The protein belongs to the adenylate kinase family. As to quaternary structure, monomer.

It localises to the cytoplasm. The enzyme catalyses AMP + ATP = 2 ADP. The protein operates within purine metabolism; AMP biosynthesis via salvage pathway; AMP from ADP: step 1/1. Its function is as follows. Catalyzes the reversible transfer of the terminal phosphate group between ATP and AMP. Plays an important role in cellular energy homeostasis and in adenine nucleotide metabolism. The protein is Adenylate kinase of Chlorobium phaeobacteroides (strain DSM 266 / SMG 266 / 2430).